Here is a 459-residue protein sequence, read N- to C-terminus: Transmembrane protein 143 (459 aa).

Helical transmembrane passes span 280–300 and 301–321; these read LLNLMLVVSGVAIFVNVGMVV and LTDLKVATSLLLLLFAIFMGL. Residue serine 332 is modified to Phosphoserine. Residues 435–459 are disordered; sequence GFPKLDPVAPITSEPPQATPSSNIS. The segment covering 448–459 has biased composition (polar residues); sequence EPPQATPSSNIS.

Its subcellular location is the membrane. The chain is Transmembrane protein 143 (TMEM143) from Homo sapiens (Human).